The chain runs to 57 residues: UPF0434 protein Shal_2504 (57 aa).

This sequence belongs to the UPF0434 family.

This Shewanella halifaxensis (strain HAW-EB4) protein is UPF0434 protein Shal_2504.